A 149-amino-acid polypeptide reads, in one-letter code: MRAVVQRIKEGKVTVEGEITGECNFGLLVYLGVGREDTVEDAKYLAEKIVNLRIFEDQEEKLNLSVKDVGGSLLVISQFTLFGDCRKGRRPSFSEAAKPDEADYLYQEFVRCCNDVGMTVGTGVFQAHMMVHAINDGPVTMLIDSKKTF.

Positions 137–138 (GP) match the Gly-cisPro motif, important for rejection of L-amino acids motif.

This sequence belongs to the DTD family. As to quaternary structure, homodimer.

Its subcellular location is the cytoplasm. The enzyme catalyses glycyl-tRNA(Ala) + H2O = tRNA(Ala) + glycine + H(+). The catalysed reaction is a D-aminoacyl-tRNA + H2O = a tRNA + a D-alpha-amino acid + H(+). Functionally, an aminoacyl-tRNA editing enzyme that deacylates mischarged D-aminoacyl-tRNAs. Also deacylates mischarged glycyl-tRNA(Ala), protecting cells against glycine mischarging by AlaRS. Acts via tRNA-based rather than protein-based catalysis; rejects L-amino acids rather than detecting D-amino acids in the active site. By recycling D-aminoacyl-tRNA to D-amino acids and free tRNA molecules, this enzyme counteracts the toxicity associated with the formation of D-aminoacyl-tRNA entities in vivo and helps enforce protein L-homochirality. This is D-aminoacyl-tRNA deacylase from Alkaliphilus metalliredigens (strain QYMF).